The sequence spans 112 residues: Nitrogen regulatory protein P-II (112 aa).

The residue at position 49 (serine 49) is a Phosphoserine. Tyrosine 51 is subject to O-UMP-tyrosine.

It belongs to the P(II) protein family. Homotrimer. Phosphorylation dependent on the nitrogen source and spectral light quality.

Its function is as follows. P-II indirectly controls the transcription of the GS gene (glnA). P-II prevents NR-II-catalyzed conversion of NR-I to NR-I-phosphate, the transcriptional activator of glnA. When P-II is phosphorylated, these events are reversed. In nitrogen-limiting conditions, when the ratio of Gln to 2-ketoglutarate decreases, P-II is phosphorylated which allows the deadenylation of glutamine synthetase (GS), thus activating the enzyme. The chain is Nitrogen regulatory protein P-II (glnB) from Microchaete diplosiphon (Fremyella diplosiphon).